Here is a 273-residue protein sequence, read N- to C-terminus: Dermonecrotic toxin LafSicTox-betaIE1 (273 aa).

The active site involves His-5. Residues Glu-25 and Asp-27 each contribute to the Mg(2+) site. His-41 (nucleophile) is an active-site residue. Intrachain disulfides connect Cys-45–Cys-51 and Cys-47–Cys-189. Asp-85 is a binding site for Mg(2+). N-linked (GlcNAc...) asparagine glycosylation occurs at Asn-250.

It belongs to the arthropod phospholipase D family. Class II subfamily. Requires Mg(2+) as cofactor. In terms of tissue distribution, expressed by the venom gland.

It localises to the secreted. It carries out the reaction an N-(acyl)-sphingosylphosphocholine = an N-(acyl)-sphingosyl-1,3-cyclic phosphate + choline. It catalyses the reaction an N-(acyl)-sphingosylphosphoethanolamine = an N-(acyl)-sphingosyl-1,3-cyclic phosphate + ethanolamine. The catalysed reaction is a 1-acyl-sn-glycero-3-phosphocholine = a 1-acyl-sn-glycero-2,3-cyclic phosphate + choline. The enzyme catalyses a 1-acyl-sn-glycero-3-phosphoethanolamine = a 1-acyl-sn-glycero-2,3-cyclic phosphate + ethanolamine. In terms of biological role, dermonecrotic toxins cleave the phosphodiester linkage between the phosphate and headgroup of certain phospholipids (sphingolipid and lysolipid substrates), forming an alcohol (often choline) and a cyclic phosphate. This toxin acts on sphingomyelin (SM). It may also act on ceramide phosphoethanolamine (CPE), lysophosphatidylcholine (LPC) and lysophosphatidylethanolamine (LPE), but not on lysophosphatidylserine (LPS), and lysophosphatidylglycerol (LPG). It acts by transphosphatidylation, releasing exclusively cyclic phosphate products as second products. Induces dermonecrosis, hemolysis, increased vascular permeability, edema, inflammatory response, and platelet aggregation. In Loxosceles aff. spinulosa (strain GJB-2008) (Recluse spider), this protein is Dermonecrotic toxin LafSicTox-betaIE1.